A 348-amino-acid polypeptide reads, in one-letter code: D-alanine--D-alanine ligase (348 aa).

Residues 132-334 (KRVLESAGIA…YPDLIEKLVA (203 aa)) form the ATP-grasp domain. 162–217 (EEKLSYPVFTKPSNMGSSVGISKSDNQEELRASLDLAFKYDSRVLVEQGVTAREIE) provides a ligand contact to ATP. Asp-288, Glu-301, and Asn-303 together coordinate Mg(2+).

The protein belongs to the D-alanine--D-alanine ligase family. Mg(2+) is required as a cofactor. It depends on Mn(2+) as a cofactor.

Its subcellular location is the cytoplasm. It catalyses the reaction 2 D-alanine + ATP = D-alanyl-D-alanine + ADP + phosphate + H(+). It participates in cell wall biogenesis; peptidoglycan biosynthesis. In terms of biological role, cell wall formation. The sequence is that of D-alanine--D-alanine ligase from Streptococcus gordonii (strain Challis / ATCC 35105 / BCRC 15272 / CH1 / DL1 / V288).